Consider the following 223-residue polypeptide: Class E basic helix-loop-helix protein 23 (223 aa).

A disordered region spans residues 32–93 (PETTRGFGAS…GVAVDARRRP (62 aa)). In terms of domain architecture, bHLH spans 98 to 152 (SLRLSINARERRRMHDLNDALDGLRAVIPYAHSPSVRKLSKIATLLLAKNYILMQ).

As to expression, expressed in brain and retina.

It is found in the nucleus. In terms of biological role, may function as transcriptional repressor. May modulate the expression of genes required for the differentiation and/or maintenance of pancreatic and neuronal cell types. May be important for rod bipolar cell maturation. In Mus musculus (Mouse), this protein is Class E basic helix-loop-helix protein 23 (Bhlhe23).